A 139-amino-acid polypeptide reads, in one-letter code: Natriuretic peptide Mc-NP (139 aa).

Positions 1 to 25 are cleaved as a signal peptide; that stretch reads MVGLSRLRGGGLLLVLALLPLALDG. Positions 26 to 75 are excised as a propeptide; that stretch reads KPLEEAPTAPSRIIPFSRPVRKQSQAVLDPMVHPERPAGSGDDGDSRRLE. The segment at 45 to 72 is disordered; it reads VRKQSQAVLDPMVHPERPAGSGDDGDSR. Cys86 and Cys102 form a disulfide bridge. Residues 117-139 constitute a propeptide that is removed on maturation; it reads IIPFSRPVRKESRAALDRMQQPG.

The protein belongs to the natriuretic peptide family. In terms of tissue distribution, expressed by the venom gland.

It is found in the secreted. Functionally, snake venom natriuretic peptide that dose-dependently induces the rapid relaxation of rat aortic strips phenylephrine-precontracted. Acts by stimulating cGMP production in a dose-dependent manner (by probably activating NPR1 and/or NPR2). May also show potent hypotensive effects. A synthetic peptide (AA 77-108, where the Cys-95 is replaced by a Ser) increases sodium excretion and urinary volume in rat kidneys. The protein is Natriuretic peptide Mc-NP of Micrurus corallinus (Brazilian coral snake).